Reading from the N-terminus, the 361-residue chain is Phosphoserine aminotransferase (361 aa).

Residue arginine 43 participates in L-glutamate binding. Pyridoxal 5'-phosphate-binding positions include 77-78 (AS), tryptophan 103, threonine 153, aspartate 173, and glutamine 196. Residue lysine 197 is modified to N6-(pyridoxal phosphate)lysine. A pyridoxal 5'-phosphate-binding site is contributed by 238-239 (NT).

It belongs to the class-V pyridoxal-phosphate-dependent aminotransferase family. SerC subfamily. As to quaternary structure, homodimer. The cofactor is pyridoxal 5'-phosphate.

The protein resides in the cytoplasm. The enzyme catalyses O-phospho-L-serine + 2-oxoglutarate = 3-phosphooxypyruvate + L-glutamate. It carries out the reaction 4-(phosphooxy)-L-threonine + 2-oxoglutarate = (R)-3-hydroxy-2-oxo-4-phosphooxybutanoate + L-glutamate. It participates in amino-acid biosynthesis; L-serine biosynthesis; L-serine from 3-phospho-D-glycerate: step 2/3. It functions in the pathway cofactor biosynthesis; pyridoxine 5'-phosphate biosynthesis; pyridoxine 5'-phosphate from D-erythrose 4-phosphate: step 3/5. Functionally, catalyzes the reversible conversion of 3-phosphohydroxypyruvate to phosphoserine and of 3-hydroxy-2-oxo-4-phosphonooxybutanoate to phosphohydroxythreonine. The protein is Phosphoserine aminotransferase of Pseudomonas entomophila (strain L48).